The following is a 160-amino-acid chain: UPF0262 protein BSUIS_A0274 (160 aa).

This sequence belongs to the UPF0262 family.

This chain is UPF0262 protein BSUIS_A0274, found in Brucella suis (strain ATCC 23445 / NCTC 10510).